We begin with the raw amino-acid sequence, 114 residues long: T cell receptor beta variable 25-1 (114 aa).

The N-terminal stretch at 1–21 (MTIRLLCYVGFYFLGAGLMEA) is a signal peptide. Residues 22-114 (DIYQTPRYLV…TSQYLCASSE (93 aa)) enclose the Ig-like domain. Cysteine 42 and cysteine 110 form a disulfide bridge. The N-linked (GlcNAc...) asparagine glycan is linked to asparagine 72.

In terms of assembly, alpha-beta TR is a heterodimer composed of an alpha and beta chain; disulfide-linked. The alpha-beta TR is associated with the transmembrane signaling CD3 coreceptor proteins to form the TR-CD3 (TcR or TCR). The assembly of alpha-beta TR heterodimers with CD3 occurs in the endoplasmic reticulum where a single alpha-beta TR heterodimer associates with one CD3D-CD3E heterodimer, one CD3G-CD3E heterodimer and one CD247 homodimer forming a stable octameric structure. CD3D-CD3E and CD3G-CD3E heterodimers preferentially associate with TR alpha and TR beta chains, respectively. The association of the CD247 homodimer is the last step of TcR assembly in the endoplasmic reticulum and is required for transport to the cell surface.

It localises to the cell membrane. V region of the variable domain of T cell receptor (TR) beta chain that participates in the antigen recognition. Alpha-beta T cell receptors are antigen specific receptors which are essential to the immune response and are present on the cell surface of T lymphocytes. Recognize peptide-major histocompatibility (MH) (pMH) complexes that are displayed by antigen presenting cells (APC), a prerequisite for efficient T cell adaptive immunity against pathogens. Binding of alpha-beta TR to pMH complex initiates TR-CD3 clustering on the cell surface and intracellular activation of LCK that phosphorylates the ITAM motifs of CD3G, CD3D, CD3E and CD247 enabling the recruitment of ZAP70. In turn ZAP70 phosphorylates LAT, which recruits numerous signaling molecules to form the LAT signalosome. The LAT signalosome propagates signal branching to three major signaling pathways, the calcium, the mitogen-activated protein kinase (MAPK) kinase and the nuclear factor NF-kappa-B (NF-kB) pathways, leading to the mobilization of transcription factors that are critical for gene expression and essential for T cell growth and differentiation. The T cell repertoire is generated in the thymus, by V-(D)-J rearrangement. This repertoire is then shaped by intrathymic selection events to generate a peripheral T cell pool of self-MH restricted, non-autoaggressive T cells. Post-thymic interaction of alpha-beta TR with the pMH complexes shapes TR structural and functional avidity. This chain is T cell receptor beta variable 25-1, found in Homo sapiens (Human).